Here is a 579-residue protein sequence, read N- to C-terminus: 2-isopropylmalate synthase (579 aa).

The Pyruvate carboxyltransferase domain maps to 40–314 (PRWCAVDLRD…DPMIDFSDID (275 aa)). The Mg(2+) site is built by Asp49, His253, His255, and Asn289. The tract at residues 456–579 (SDEEQAQWGR…VNRAVRDAQA (124 aa)) is regulatory domain.

Belongs to the alpha-IPM synthase/homocitrate synthase family. LeuA type 2 subfamily. As to quaternary structure, homodimer. It depends on Mg(2+) as a cofactor.

The protein localises to the cytoplasm. It carries out the reaction 3-methyl-2-oxobutanoate + acetyl-CoA + H2O = (2S)-2-isopropylmalate + CoA + H(+). The protein operates within amino-acid biosynthesis; L-leucine biosynthesis; L-leucine from 3-methyl-2-oxobutanoate: step 1/4. In terms of biological role, catalyzes the condensation of the acetyl group of acetyl-CoA with 3-methyl-2-oxobutanoate (2-ketoisovalerate) to form 3-carboxy-3-hydroxy-4-methylpentanoate (2-isopropylmalate). In Paenarthrobacter aurescens (strain TC1), this protein is 2-isopropylmalate synthase.